The primary structure comprises 336 residues: Dihydroorotate dehydrogenase (quinone) (336 aa).

FMN-binding positions include 62–66 (AGLDK) and Thr-86. Lys-66 is a binding site for substrate. Substrate is bound at residue 111 to 115 (NRMGF). FMN contacts are provided by Asn-139 and Asn-172. Asn-172 is a binding site for substrate. Ser-175 serves as the catalytic Nucleophile. Asn-177 is a substrate binding site. 2 residues coordinate FMN: Lys-217 and Thr-245. 246–247 (NT) is a binding site for substrate. FMN is bound by residues Gly-268, Gly-297, and 318 to 319 (YT).

The protein belongs to the dihydroorotate dehydrogenase family. Type 2 subfamily. Monomer. Requires FMN as cofactor.

It localises to the cell membrane. The catalysed reaction is (S)-dihydroorotate + a quinone = orotate + a quinol. It functions in the pathway pyrimidine metabolism; UMP biosynthesis via de novo pathway; orotate from (S)-dihydroorotate (quinone route): step 1/1. Its function is as follows. Catalyzes the conversion of dihydroorotate to orotate with quinone as electron acceptor. The protein is Dihydroorotate dehydrogenase (quinone) of Vibrio parahaemolyticus serotype O3:K6 (strain RIMD 2210633).